A 400-amino-acid polypeptide reads, in one-letter code: Acetate kinase (400 aa).

Mg(2+) is bound at residue asparagine 10. Lysine 17 provides a ligand contact to ATP. Arginine 91 is a binding site for substrate. Aspartate 150 functions as the Proton donor/acceptor in the catalytic mechanism. Residues histidine 210–glycine 214, aspartate 285–arginine 287, and glycine 333–asparagine 337 each bind ATP. Residue glutamate 387 coordinates Mg(2+).

It belongs to the acetokinase family. As to quaternary structure, homodimer. Requires Mg(2+) as cofactor. It depends on Mn(2+) as a cofactor.

Its subcellular location is the cytoplasm. The catalysed reaction is acetate + ATP = acetyl phosphate + ADP. Its pathway is metabolic intermediate biosynthesis; acetyl-CoA biosynthesis; acetyl-CoA from acetate: step 1/2. In terms of biological role, catalyzes the formation of acetyl phosphate from acetate and ATP. Can also catalyze the reverse reaction. The chain is Acetate kinase from Escherichia coli O157:H7.